The chain runs to 481 residues: Heat stress transcription factor A-1b (481 aa).

Positions 1-16 (MESVPESVPSPNSNTP) are enriched in low complexity. Positions 1–23 (MESVPESVPSPNSNTPSIPPPVN) are disordered. A DNA-binding region spans residues 25 to 119 (VPPFLSKTYD…LLKSIVRRKP (95 aa)). Residues 138–204 (ACVEVGKFGI…QMMSFLAKAV (67 aa)) form a hydrophobic repeat HR-A/B region. Residues 213–227 (LVQQNNNDGNRQIPG) are compositionally biased toward polar residues. Positions 213-244 (LVQQNNNDGNRQIPGSNKKRRLPVDEQENRGD) are disordered. The Nuclear localization signal signature appears at 229 to 233 (NKKRR). Over residues 234–243 (LPVDEQENRG) the composition is skewed to basic and acidic residues. The AHA signature appears at 418–427 (DPFWEQFFSV). Residues 467-474 (LTEQMGLL) carry the Nuclear export signal motif.

It belongs to the HSF family. Class A subfamily. In terms of assembly, homotrimer. Binds to HSBP. In terms of processing, exhibits temperature-dependent phosphorylation.

Its subcellular location is the cytoplasm. The protein localises to the nucleus. Its function is as follows. Transcriptional activator that specifically binds DNA sequence 5'-AGAAnnTTCT-3' known as heat shock promoter elements (HSE). This is Heat stress transcription factor A-1b (HSFA1B) from Arabidopsis thaliana (Mouse-ear cress).